Here is a 329-residue protein sequence, read N- to C-terminus: CDP-diacylglycerol--glycerol-3-phosphate 3-phosphatidyltransferase 1, chloroplastic (329 aa).

A chloroplast-targeting transit peptide spans Met-1 to Ala-38. 4 helical membrane passes run Pro-150–Leu-170, Val-190–Ala-210, Leu-217–Val-237, and Ile-300–Ile-320.

Belongs to the CDP-alcohol phosphatidyltransferase class-I family. The cofactor is Mn(2+).

The protein localises to the plastid. The protein resides in the chloroplast membrane. It catalyses the reaction a CDP-1,2-diacyl-sn-glycerol + sn-glycerol 3-phosphate = a 1,2-diacyl-sn-glycero-3-phospho-(1'-sn-glycero-3'-phosphate) + CMP + H(+). The protein operates within phospholipid metabolism; phosphatidylglycerol biosynthesis; phosphatidylglycerol from CDP-diacylglycerol: step 1/2. Its function is as follows. Catalyzes the committed step to the synthesis of the acidic phospholipids. Transfers specifically a phosphatidyl group from CDP-diacylglycerol to glycerol-3-phosphate to form phosphatidylglycerophosphate. The protein is CDP-diacylglycerol--glycerol-3-phosphate 3-phosphatidyltransferase 1, chloroplastic of Oryza sativa subsp. japonica (Rice).